Here is a 798-residue protein sequence, read N- to C-terminus: Integrin beta-5 (798 aa).

A signal peptide spans methionine 1 to alanine 23. Residues glycine 24–asparagine 719 are Extracellular-facing. The region spanning isoleucine 27 to glutamate 76 is the PSI domain. Cystine bridges form between cysteine 28–cysteine 46, cysteine 36–cysteine 463, cysteine 39–cysteine 64, cysteine 49–cysteine 75, cysteine 202–cysteine 211, cysteine 259–cysteine 300, cysteine 401–cysteine 413, cysteine 433–cysteine 461, cysteine 465–cysteine 484, cysteine 476–cysteine 487, cysteine 489–cysteine 498, cysteine 500–cysteine 530, cysteine 513–cysteine 528, cysteine 522–cysteine 533, cysteine 535–cysteine 548, cysteine 550–cysteine 571, cysteine 555–cysteine 569, cysteine 563–cysteine 574, and cysteine 576–cysteine 585. The VWFA domain occupies tyrosine 136–isoleucine 378. Residues serine 147 and serine 149 each contribute to the Mg(2+) site. Ca(2+) is bound by residues serine 149, aspartate 152, aspartate 153, and aspartate 184. Residues asparagine 242, aspartate 244, proline 246, and glutamate 247 each coordinate Ca(2+). Glutamate 247 contributes to the Mg(2+) binding site. Residue asparagine 347 is glycosylated (N-linked (GlcNAc...) asparagine). Glycine 362 lines the Ca(2+) pocket. 2 N-linked (GlcNAc...) asparagine glycosylation sites follow: asparagine 460 and asparagine 479. I-EGF domains are found at residues cysteine 465–glutamate 499, cysteine 500–glutamate 549, cysteine 550–asparagine 586, and cysteine 587–glutamate 626. N-linked (GlcNAc...) asparagine glycosylation is present at asparagine 505. N-linked (GlcNAc...) asparagine glycosylation is present at asparagine 586. 9 disulfides stabilise this stretch: cysteine 587/cysteine 610, cysteine 594/cysteine 608, cysteine 602/cysteine 613, cysteine 615/cysteine 625, cysteine 628/cysteine 631, cysteine 635/cysteine 682, cysteine 641/cysteine 661, cysteine 644/cysteine 657, and cysteine 690/cysteine 714. N-linked (GlcNAc...) asparagine glycosylation is found at asparagine 654 and asparagine 705. The chain crosses the membrane as a helical span at residues alanine 720–tryptophan 742. Residues lysine 743–valine 798 are Cytoplasmic-facing. Serine 770 carries the phosphoserine modification.

The protein belongs to the integrin beta chain family. Heterodimer of an alpha and a beta subunit. Beta-5 (ITGB5) associates with alpha-V (ITGAV). Interacts with MYO10. Interacts with DAB2. Integrin ITGAV:ITGB5 interacts with FBLN5 (via N-terminus). ITGAV:ITGB5 interacts with CCN3. Interacts with tensin TNS3; TNS3 also interacts with PEAK1, thus acting as an adapter molecule to bridge the association of PEAK1 with ITGB5.

Its subcellular location is the cell membrane. Its function is as follows. Integrin alpha-V/beta-5 (ITGAV:ITGB5) is a receptor for fibronectin. It recognizes the sequence R-G-D in its ligand. This is Integrin beta-5 (Itgb5) from Mus musculus (Mouse).